The following is a 66-amino-acid chain: uncharacterized protein (66 aa).

Residues 1-20 (MTIINSISNFGSNNSFSNNN) are compositionally biased toward low complexity. The segment at 1-47 (MTIINSISNFGSNNSFSNNNTVNQKSVIKRSKQMKNDNTSIGSSFKN) is disordered. The segment covering 36–47 (NDNTSIGSSFKN) has biased composition (polar residues).

This is an uncharacterized protein from Dictyostelium discoideum (Social amoeba).